A 255-amino-acid polypeptide reads, in one-letter code: Glutamate racemase (255 aa).

Residues 7 to 8 and 39 to 40 each bind substrate; these read DS and YG. C70 (proton donor/acceptor) is an active-site residue. 71–72 lines the substrate pocket; that stretch reads NT. Residue C181 is the Proton donor/acceptor of the active site. 182–183 contacts substrate; it reads TH.

Belongs to the aspartate/glutamate racemases family.

It catalyses the reaction L-glutamate = D-glutamate. It participates in cell wall biogenesis; peptidoglycan biosynthesis. In terms of biological role, provides the (R)-glutamate required for cell wall biosynthesis. The sequence is that of Glutamate racemase from Helicobacter pylori (strain P12).